Here is a 137-residue protein sequence, read N- to C-terminus: Large ribosomal subunit protein uL16 (137 aa).

The protein belongs to the universal ribosomal protein uL16 family. As to quaternary structure, part of the 50S ribosomal subunit.

In terms of biological role, binds 23S rRNA and is also seen to make contacts with the A and possibly P site tRNAs. In Bradyrhizobium sp. (strain BTAi1 / ATCC BAA-1182), this protein is Large ribosomal subunit protein uL16.